Reading from the N-terminus, the 464-residue chain is Glutamate--tRNA ligase (464 aa).

The 'HIGH' region signature appears at 11 to 21 (PSPTGFIHLGN). Residues 243-247 (KMSKR) carry the 'KMSKS' region motif. An ATP-binding site is contributed by Lys246.

Belongs to the class-I aminoacyl-tRNA synthetase family. Glutamate--tRNA ligase type 1 subfamily. Monomer.

The protein localises to the cytoplasm. It catalyses the reaction tRNA(Glu) + L-glutamate + ATP = L-glutamyl-tRNA(Glu) + AMP + diphosphate. In terms of biological role, catalyzes the attachment of glutamate to tRNA(Glu) in a two-step reaction: glutamate is first activated by ATP to form Glu-AMP and then transferred to the acceptor end of tRNA(Glu). The sequence is that of Glutamate--tRNA ligase from Polaromonas naphthalenivorans (strain CJ2).